We begin with the raw amino-acid sequence, 298 residues long: NFU1 iron-sulfur cluster scaffold homolog, mitochondrial (298 aa).

Residues 190–258 form a nifU region; the sequence is IKELLDTRIR…IPEVESVEQV (69 aa). C227 and C230 together coordinate [4Fe-4S] cluster. A compositionally biased stretch (polar residues) spans 279-288; that stretch reads QKESVNQPNA. The disordered stretch occupies residues 279 to 298; it reads QKESVNQPNAPVNIGGGTPN.

It belongs to the NifU family.

It is found in the mitochondrion. Its function is as follows. Molecular scaffold for [Fe-S] cluster assembly of mitochondrial iron-sulfur proteins. The polypeptide is NFU1 iron-sulfur cluster scaffold homolog, mitochondrial (Drosophila virilis (Fruit fly)).